The following is an 866-amino-acid chain: Scm-like with four MBT domains protein 1 (866 aa).

MBT repeat units lie at residues 20–120, 128–232, 242–348, and 356–453; these read LSWE…LEAP, SDWD…LQPP, AEWQ…ISPP, and FDWA…LSTP. Residues 34 to 42 are antigenic epitope; the sequence is VPYGSFKHV. Positions 641 to 777 are disordered; that stretch reads KKKNKRIGRP…DDENKPPSPK (137 aa). The span at 663–682 shows a compositional bias: basic residues; the sequence is KASKRRKRRKNVFVHKKKRS. Positions 683–694 are enriched in polar residues; it reads SASVDNTPAGSP. 2 stretches are compositionally biased toward acidic residues: residues 699–713 and 721–730; these read GEDE…DDSL and QQDELQEESE. Residues 737 to 749 are compositionally biased toward low complexity; the sequence is CSSSPTQSEISTS. A phosphoserine mark is found at S767 and S775. Residues 796–864 enclose the SAM domain; sequence WSVADVVRFI…RIKFAFYEQF (69 aa).

In terms of assembly, interacts with MYOD1. Component of the SLC (SFMBT1-LSD1-CoREST) corepressor complex, which also contains KDM1A/LSD1 and RCOR1/CoREST. Interacts with KDM1A/LSD1 and RCOR1/CoREST. Interacts with L3MBTL3. Expressed in all cell lines and normal tissues tested, including the thymus.

The protein localises to the nucleus. In terms of biological role, histone-binding protein, which is part of various corepressor complexes. Mediates the recruitment of corepressor complexes to target genes, followed by chromatin compaction and repression of transcription. Plays a role during myogenesis: required for the maintenance of undifferentiated states of myogenic progenitor cells via interaction with MYOD1. Interaction with MYOD1 leads to the recruitment of associated corepressors and silencing of MYOD1 target genes. Part of the SLC complex in germ cells, where it may play a role during spermatogenesis. The sequence is that of Scm-like with four MBT domains protein 1 (SFMBT1) from Homo sapiens (Human).